A 547-amino-acid chain; its full sequence is uncharacterized protein (547 aa).

12 consecutive transmembrane segments (helical) span residues 33-53 (PTFFFALFSAAYVFIDQIMVI), 107-127 (PLIVLLNAINIFIPLGTGVIF), 145-165 (TGLISTTVFGLITQFLVLSFA), 203-223 (VYILIGLNIIPMLSRLFFYLA), 231-251 (FIAIVPPIANLINILIVFLLV), 263-283 (VAGILGYLINFLAYIIYLIYL), 298-318 (LNKIDFNLLVVVSLIGMASFF), 351-371 (TLLTGPIAISNLASAAIFGLL), 397-417 (TVIICISFGSLIYLLTAVAFG), 432-452 (LDLANYFSLIVQAQVFFVATG), 470-490 (IVSLTHGLFVFIPLLFIFQAI), and 499-519 (VFIWLLTANAALAGLINIAFG).

It localises to the cell membrane. This is an uncharacterized protein from Mycoplasma genitalium (strain ATCC 33530 / DSM 19775 / NCTC 10195 / G37) (Mycoplasmoides genitalium).